Consider the following 116-residue polypeptide: Large ribosomal subunit protein bL20 (116 aa).

The protein belongs to the bacterial ribosomal protein bL20 family.

Binds directly to 23S ribosomal RNA and is necessary for the in vitro assembly process of the 50S ribosomal subunit. It is not involved in the protein synthesizing functions of that subunit. The polypeptide is Large ribosomal subunit protein bL20 (Nautilia profundicola (strain ATCC BAA-1463 / DSM 18972 / AmH)).